The chain runs to 377 residues: Lactosylceramide 1,3-N-acetyl-beta-D-glucosaminyltransferase (377 aa).

Residues 1–12 lie on the Cytoplasmic side of the membrane; that stretch reads MLISARRLRRCQ. The chain crosses the membrane as a helical; Signal-anchor for type II membrane protein span at residues 13–30; the sequence is FFQLLTSCFVLSLMALLV. Topologically, residues 31-377 are lumenal; that stretch reads QEDNSLINHV…DTYPCSAAWS (347 aa). Residues Asn56, Asn167, and Asn275 are each glycosylated (N-linked (GlcNAc...) asparagine).

The protein belongs to the glycosyltransferase 31 family.

Its subcellular location is the golgi apparatus membrane. The catalysed reaction is a beta-D-Gal-(1-&gt;4)-beta-D-Glc-(1&lt;-&gt;1)-Cer(d18:1(4E)) + UDP-N-acetyl-alpha-D-glucosamine = a beta-D-GlcNAc-(1-&gt;3)-beta-D-Gal-(1-&gt;4)-beta-D-Glc-(1&lt;-&gt;1)-Cer(d18:1(4E)) + UDP + H(+). The enzyme catalyses a neolactoside nLc4Cer(d18:1(4E)) + UDP-N-acetyl-alpha-D-glucosamine = a neolactoside IV(3)-beta-GlcNAc-nLc4Cer(d18:1(4E)) + UDP + H(+). It functions in the pathway protein modification; protein glycosylation. Functionally, beta-1,3-N-acetylglucosaminyltransferase that plays a key role in the synthesis of lacto- or neolacto-series carbohydrate chains on glycolipids. The protein is Lactosylceramide 1,3-N-acetyl-beta-D-glucosaminyltransferase (b3gnt5) of Xenopus tropicalis (Western clawed frog).